The primary structure comprises 334 residues: Glycerol-3-phosphate dehydrogenase [NAD(P)+] (334 aa).

NADPH-binding residues include S14, Y15, H35, and K109. Residues K109, G138, and T140 each coordinate sn-glycerol 3-phosphate. A142 lines the NADPH pocket. Residues K194, D247, S257, R258, and N259 each contribute to the sn-glycerol 3-phosphate site. K194 serves as the catalytic Proton acceptor. R258 contacts NADPH. Positions 282 and 284 each coordinate NADPH.

Belongs to the NAD-dependent glycerol-3-phosphate dehydrogenase family.

It localises to the cytoplasm. The catalysed reaction is sn-glycerol 3-phosphate + NAD(+) = dihydroxyacetone phosphate + NADH + H(+). It catalyses the reaction sn-glycerol 3-phosphate + NADP(+) = dihydroxyacetone phosphate + NADPH + H(+). It functions in the pathway membrane lipid metabolism; glycerophospholipid metabolism. In terms of biological role, catalyzes the reduction of the glycolytic intermediate dihydroxyacetone phosphate (DHAP) to sn-glycerol 3-phosphate (G3P), the key precursor for phospholipid synthesis. This chain is Glycerol-3-phosphate dehydrogenase [NAD(P)+], found in Psychromonas ingrahamii (strain DSM 17664 / CCUG 51855 / 37).